A 626-amino-acid chain; its full sequence is DNA primase (626 aa).

Residues 39 to 63 form a CHC2-type zinc finger; sequence CPFHGEKTPSFSVSPEKQIFHCFGC. The 83-residue stretch at 264–346 folds into the Toprim domain; sequence EEITLMEGFM…DVFVLQLPAG (83 aa). Residues glutamate 270, aspartate 314, and aspartate 316 each contribute to the Mg(2+) site.

This sequence belongs to the DnaG primase family. In terms of assembly, monomer. Interacts with DnaB. Requires Zn(2+) as cofactor. The cofactor is Mg(2+).

It catalyses the reaction ssDNA + n NTP = ssDNA/pppN(pN)n-1 hybrid + (n-1) diphosphate.. In terms of biological role, RNA polymerase that catalyzes the synthesis of short RNA molecules used as primers for DNA polymerase during DNA replication. This Listeria innocua serovar 6a (strain ATCC BAA-680 / CLIP 11262) protein is DNA primase.